The following is a 547-amino-acid chain: Chaperonin GroEL (547 aa).

ATP contacts are provided by residues 30-33, Lys51, 87-91, Gly415, 478-480, and Asp494; these read TLGP, DGTTT, and NAA.

The protein belongs to the chaperonin (HSP60) family. Forms a cylinder of 14 subunits composed of two heptameric rings stacked back-to-back. Interacts with the co-chaperonin GroES.

It is found in the cytoplasm. It catalyses the reaction ATP + H2O + a folded polypeptide = ADP + phosphate + an unfolded polypeptide.. Together with its co-chaperonin GroES, plays an essential role in assisting protein folding. The GroEL-GroES system forms a nano-cage that allows encapsulation of the non-native substrate proteins and provides a physical environment optimized to promote and accelerate protein folding. The protein is Chaperonin GroEL of Geobacter sp. (strain M21).